The following is a 353-amino-acid chain: Ferredoxin--NADP reductase 1 (353 aa).

FAD is bound by residues Asp-43, Gln-51, Tyr-56, Ala-96, Phe-135, Asp-300, and Ser-341.

Belongs to the ferredoxin--NADP reductase type 2 family. Homodimer. FAD is required as a cofactor.

The enzyme catalyses 2 reduced [2Fe-2S]-[ferredoxin] + NADP(+) + H(+) = 2 oxidized [2Fe-2S]-[ferredoxin] + NADPH. This is Ferredoxin--NADP reductase 1 from Cupriavidus metallidurans (strain ATCC 43123 / DSM 2839 / NBRC 102507 / CH34) (Ralstonia metallidurans).